The following is a 61-amino-acid chain: Short neurotoxin 2 (61 aa).

4 cysteine pairs are disulfide-bonded: cysteine 3–cysteine 23, cysteine 17–cysteine 40, cysteine 42–cysteine 53, and cysteine 54–cysteine 59.

The protein belongs to the three-finger toxin family. Short-chain subfamily. Type I alpha-neurotoxin sub-subfamily. As to expression, expressed by the venom gland.

The protein resides in the secreted. In terms of biological role, binds to muscle nicotinic acetylcholine receptor (nAChR) and inhibit acetylcholine from binding to the receptor, thereby impairing neuromuscular transmission. This Naja nivea (Cape cobra) protein is Short neurotoxin 2.